Reading from the N-terminus, the 224-residue chain is Putative adhesin RMA_1308 (224 aa).

A signal peptide spans methionine 1 to alanine 22.

This chain is Putative adhesin RMA_1308, found in Rickettsia massiliae (strain Mtu5).